The chain runs to 314 residues: DNA-directed RNA polymerase subunit alpha (314 aa).

Residues 1–227 form an alpha N-terminal domain (alpha-NTD) region; it reads MTKFEIECVE…ELLHPLKEIN (227 aa). The segment at 241–314 is alpha C-terminal domain (alpha-CTD); it reads KINQILIEEL…LPKEKTVKPN (74 aa).

The protein belongs to the RNA polymerase alpha chain family. In terms of assembly, in plastids the minimal PEP RNA polymerase catalytic core is composed of four subunits: alpha, beta, beta', and beta''. When a (nuclear-encoded) sigma factor is associated with the core the holoenzyme is formed, which can initiate transcription.

The protein resides in the plastid. Its subcellular location is the chloroplast. The catalysed reaction is RNA(n) + a ribonucleoside 5'-triphosphate = RNA(n+1) + diphosphate. Functionally, DNA-dependent RNA polymerase catalyzes the transcription of DNA into RNA using the four ribonucleoside triphosphates as substrates. The polypeptide is DNA-directed RNA polymerase subunit alpha (Rhodomonas salina (Cryptomonas salina)).